Consider the following 156-residue polypeptide: Small ribosomal subunit protein uS7 (156 aa).

This sequence belongs to the universal ribosomal protein uS7 family. As to quaternary structure, part of the 30S ribosomal subunit. Contacts proteins S9 and S11.

In terms of biological role, one of the primary rRNA binding proteins, it binds directly to 16S rRNA where it nucleates assembly of the head domain of the 30S subunit. Is located at the subunit interface close to the decoding center, probably blocks exit of the E-site tRNA. In Methylorubrum populi (strain ATCC BAA-705 / NCIMB 13946 / BJ001) (Methylobacterium populi), this protein is Small ribosomal subunit protein uS7.